The sequence spans 130 residues: Glycine cleavage system H protein (130 aa).

In terms of domain architecture, Lipoyl-binding spans 24–106 (IYSVGITEHA…YADGWLFRIR (83 aa)). An N6-lipoyllysine modification is found at lysine 65.

The protein belongs to the GcvH family. The glycine cleavage system is composed of four proteins: P, T, L and H. It depends on (R)-lipoate as a cofactor.

Its function is as follows. The glycine cleavage system catalyzes the degradation of glycine. The H protein shuttles the methylamine group of glycine from the P protein to the T protein. This Pectobacterium carotovorum subsp. carotovorum (strain PC1) protein is Glycine cleavage system H protein.